A 335-amino-acid polypeptide reads, in one-letter code: Beta-hexosaminidase (335 aa).

Substrate contacts are provided by residues aspartate 60, arginine 68, arginine 133, and 163 to 164 (KH). The active-site Proton donor/acceptor is the histidine 176. The Nucleophile role is filled by aspartate 247.

This sequence belongs to the glycosyl hydrolase 3 family. NagZ subfamily.

The protein resides in the cytoplasm. The enzyme catalyses Hydrolysis of terminal non-reducing N-acetyl-D-hexosamine residues in N-acetyl-beta-D-hexosaminides.. It functions in the pathway cell wall biogenesis; peptidoglycan recycling. Functionally, plays a role in peptidoglycan recycling by cleaving the terminal beta-1,4-linked N-acetylglucosamine (GlcNAc) from peptide-linked peptidoglycan fragments, giving rise to free GlcNAc, anhydro-N-acetylmuramic acid and anhydro-N-acetylmuramic acid-linked peptides. In Xylella fastidiosa (strain M12), this protein is Beta-hexosaminidase.